Here is a 206-residue protein sequence, read N- to C-terminus: LexA repressor (206 aa).

Residues 29–49 (VREICEAVGLRSTSTVHGHLA) constitute a DNA-binding region (H-T-H motif). Catalysis depends on for autocatalytic cleavage activity residues Ser130 and Lys167.

Belongs to the peptidase S24 family. As to quaternary structure, homodimer.

The enzyme catalyses Hydrolysis of Ala-|-Gly bond in repressor LexA.. In terms of biological role, represses a number of genes involved in the response to DNA damage (SOS response), including recA and lexA. In the presence of single-stranded DNA, RecA interacts with LexA causing an autocatalytic cleavage which disrupts the DNA-binding part of LexA, leading to derepression of the SOS regulon and eventually DNA repair. The polypeptide is LexA repressor (Alkaliphilus oremlandii (strain OhILAs) (Clostridium oremlandii (strain OhILAs))).